We begin with the raw amino-acid sequence, 681 residues long: Potassium-transporting ATPase ATP-binding subunit 1 (681 aa).

4 helical membrane-spanning segments follow: residues 30–50, 59–79, 216–236, and 255–275; these read LLVYVGAILATSLYFLGFFGI, LAIALILWFTVLFANFAEAIA, ILLVTLSIIFLAVSATLLPFT, and IALLVCLAPTTIGALLSSIGI. Catalysis depends on Asp306, which acts as the 4-aspartylphosphate intermediate. Residues Asp343, Glu347, 376–383, and Lys394 contribute to the ATP site; that span reads FTATTRMS. The Mg(2+) site is built by Asp517 and Asp521. 3 helical membrane-spanning segments follow: residues 587–607, 615–635, and 661–681; these read FAIIPVLFYGIFPQLEALNLM, AILSAIIYNAVIIIFLIPLSL, and LIAPFIAIKLIDMLLTVLGIV.

The protein belongs to the cation transport ATPase (P-type) (TC 3.A.3) family. Type IA subfamily. As to quaternary structure, the system is composed of three essential subunits: KdpA, KdpB and KdpC.

The protein localises to the cell membrane. It catalyses the reaction K(+)(out) + ATP + H2O = K(+)(in) + ADP + phosphate + H(+). Functionally, part of the high-affinity ATP-driven potassium transport (or Kdp) system, which catalyzes the hydrolysis of ATP coupled with the electrogenic transport of potassium into the cytoplasm. This subunit is responsible for energy coupling to the transport system and for the release of the potassium ions to the cytoplasm. This is Potassium-transporting ATPase ATP-binding subunit 1 from Listeria innocua serovar 6a (strain ATCC BAA-680 / CLIP 11262).